A 347-amino-acid chain; its full sequence is 4-hydroxy-2-oxovalerate aldolase 4 (347 aa).

The Pyruvate carboxyltransferase domain occupies 9–259; that stretch reads ITIVDTTLRD…DTGVDLFPLI (251 aa). Residues 17 to 18, Ser-171, and His-198 contribute to the substrate site; that span reads RD. Asp-18 provides a ligand contact to Mn(2+). Mn(2+) is bound by residues His-198 and His-200. Tyr-289 is a substrate binding site.

This sequence belongs to the 4-hydroxy-2-oxovalerate aldolase family.

It carries out the reaction (S)-4-hydroxy-2-oxopentanoate = acetaldehyde + pyruvate. The polypeptide is 4-hydroxy-2-oxovalerate aldolase 4 (Rhodococcus opacus (strain B4)).